A 214-amino-acid polypeptide reads, in one-letter code: Pyrrolidone-carboxylate peptidase (214 aa).

Catalysis depends on residues glutamate 78, cysteine 141, and histidine 165.

Belongs to the peptidase C15 family. In terms of assembly, homotetramer.

The protein resides in the cytoplasm. The enzyme catalyses Release of an N-terminal pyroglutamyl group from a polypeptide, the second amino acid generally not being Pro.. Removes 5-oxoproline from various penultimate amino acid residues except L-proline. The chain is Pyrrolidone-carboxylate peptidase from Streptococcus pneumoniae (strain 70585).